The primary structure comprises 192 residues: Small ribosomal subunit protein uS4c-2 (192 aa).

Residues 91–155 enclose the S4 RNA-binding domain; sequence TRLDHLVYRA…PKPPEYLPPY (65 aa).

Belongs to the universal ribosomal protein uS4 family. In terms of assembly, part of the 30S ribosomal subunit. Contacts protein S5. The interaction surface between S4 and S5 is involved in control of translational fidelity.

The protein localises to the plastid. The protein resides in the chloroplast. In terms of biological role, one of the primary rRNA binding proteins, it binds directly to 16S rRNA where it nucleates assembly of the body of the 30S subunit. Its function is as follows. With S5 and S12 plays an important role in translational accuracy. The sequence is that of Small ribosomal subunit protein uS4c-2 from Cyanidium caldarium (Red alga).